Reading from the N-terminus, the 192-residue chain is Leucine-rich repeat-containing protein 51 (192 aa).

LRR repeat units lie at residues Ser-49 to Val-71, Asn-80 to Phe-101, and Asn-103 to Ala-124. An LRRCT domain is found at Asn-137–Trp-175.

Widely expressed in adult and embryonic tissues. Expressed in the developing choroid plexus from 12.5 dpc and in the epithelium of the developing airway tract from 14.5 dpc. Also expressed in the postnatal inner ear.

It is found in the cytoplasm. This Mus musculus (Mouse) protein is Leucine-rich repeat-containing protein 51.